Reading from the N-terminus, the 275-residue chain is Nitrogenase iron protein 1 (275 aa).

9-16 (GKGGIGKS) lines the ATP pocket. Residue cysteine 97 participates in [4Fe-4S] cluster binding. Residue arginine 100 is modified to ADP-ribosylarginine; by dinitrogenase reductase ADP-ribosyltransferase. Cysteine 132 contributes to the [4Fe-4S] cluster binding site.

This sequence belongs to the NifH/BchL/ChlL family. In terms of assembly, homodimer. Requires [4Fe-4S] cluster as cofactor. The reversible ADP-ribosylation of Arg-100 inactivates the nitrogenase reductase and regulates nitrogenase activity.

It carries out the reaction N2 + 8 reduced [2Fe-2S]-[ferredoxin] + 16 ATP + 16 H2O = H2 + 8 oxidized [2Fe-2S]-[ferredoxin] + 2 NH4(+) + 16 ADP + 16 phosphate + 6 H(+). Its function is as follows. The key enzymatic reactions in nitrogen fixation are catalyzed by the nitrogenase complex, which has 2 components: the iron protein and the molybdenum-iron protein. The polypeptide is Nitrogenase iron protein 1 (nifH1) (Methanothermobacter thermautotrophicus (strain ATCC 29096 / DSM 1053 / JCM 10044 / NBRC 100330 / Delta H) (Methanobacterium thermoautotrophicum)).